Consider the following 179-residue polypeptide: Adenine phosphoribosyltransferase (179 aa).

The protein belongs to the purine/pyrimidine phosphoribosyltransferase family. As to quaternary structure, homodimer.

The protein localises to the cytoplasm. It carries out the reaction AMP + diphosphate = 5-phospho-alpha-D-ribose 1-diphosphate + adenine. The protein operates within purine metabolism; AMP biosynthesis via salvage pathway; AMP from adenine: step 1/1. Catalyzes a salvage reaction resulting in the formation of AMP, that is energically less costly than de novo synthesis. This is Adenine phosphoribosyltransferase from Helicobacter acinonychis (strain Sheeba).